A 449-amino-acid polypeptide reads, in one-letter code: Trigger factor (449 aa).

Positions 173 to 258 constitute a PPIase FKBP-type domain; that stretch reads GDRVTVDFVG…LKKVEWPHLP (86 aa).

The protein belongs to the FKBP-type PPIase family. Tig subfamily.

It localises to the cytoplasm. It carries out the reaction [protein]-peptidylproline (omega=180) = [protein]-peptidylproline (omega=0). Its function is as follows. Involved in protein export. Acts as a chaperone by maintaining the newly synthesized protein in an open conformation. Functions as a peptidyl-prolyl cis-trans isomerase. The polypeptide is Trigger factor (Burkholderia pseudomallei (strain 1710b)).